We begin with the raw amino-acid sequence, 214 residues long: Octanoyltransferase (214 aa).

Positions 31-206 (KDDADEIWLL…QLAEQLGYNY (176 aa)) constitute a BPL/LPL catalytic domain. Residues 70 to 77 (RGGQVTYH), 137 to 139 (SLG), and 150 to 152 (GLA) contribute to the substrate site. Cys-168 serves as the catalytic Acyl-thioester intermediate.

This sequence belongs to the LipB family.

The protein resides in the cytoplasm. The enzyme catalyses octanoyl-[ACP] + L-lysyl-[protein] = N(6)-octanoyl-L-lysyl-[protein] + holo-[ACP] + H(+). It participates in protein modification; protein lipoylation via endogenous pathway; protein N(6)-(lipoyl)lysine from octanoyl-[acyl-carrier-protein]: step 1/2. In terms of biological role, catalyzes the transfer of endogenously produced octanoic acid from octanoyl-acyl-carrier-protein onto the lipoyl domains of lipoate-dependent enzymes. Lipoyl-ACP can also act as a substrate although octanoyl-ACP is likely to be the physiological substrate. In Marinomonas sp. (strain MWYL1), this protein is Octanoyltransferase.